The primary structure comprises 160 residues: Cytochrome b6-f complex subunit 4 (160 aa).

3 helical membrane-spanning segments follow: residues 36 to 56 (LLYV…GLAV), 95 to 115 (LLGV…PFIE), and 131 to 151 (LVFI…CLPI).

Belongs to the cytochrome b family. PetD subfamily. As to quaternary structure, the 4 large subunits of the cytochrome b6-f complex are cytochrome b6, subunit IV (17 kDa polypeptide, petD), cytochrome f and the Rieske protein, while the 4 small subunits are petG, petL, petM and petN. The complex functions as a dimer.

It is found in the plastid. The protein resides in the chloroplast thylakoid membrane. Functionally, component of the cytochrome b6-f complex, which mediates electron transfer between photosystem II (PSII) and photosystem I (PSI), cyclic electron flow around PSI, and state transitions. This is Cytochrome b6-f complex subunit 4 from Trieres chinensis (Marine centric diatom).